Here is a 548-residue protein sequence, read N- to C-terminus: Chaperonin GroEL (548 aa).

ATP is bound by residues 29–32 (TMGP), Lys-50, 86–90 (DGTTT), Gly-414, 478–480 (NAA), and Asp-494.

The protein belongs to the chaperonin (HSP60) family. In terms of assembly, forms a cylinder of 14 subunits composed of two heptameric rings stacked back-to-back. Interacts with the co-chaperonin GroES.

Its subcellular location is the cytoplasm. The enzyme catalyses ATP + H2O + a folded polypeptide = ADP + phosphate + an unfolded polypeptide.. In terms of biological role, together with its co-chaperonin GroES, plays an essential role in assisting protein folding. The GroEL-GroES system forms a nano-cage that allows encapsulation of the non-native substrate proteins and provides a physical environment optimized to promote and accelerate protein folding. Functionally, may play a protective role against the defense mechanisms generated by the infected macrophages. The sequence is that of Chaperonin GroEL from Legionella pneumophila subsp. pneumophila (strain Philadelphia 1 / ATCC 33152 / DSM 7513).